Consider the following 258-residue polypeptide: TLC domain-containing protein 4 A (258 aa).

The next 7 helical transmembrane spans lie at 8–28, 49–71, 92–112, 118–138, 144–164, 170–190, and 217–237; these read YLIS…YIWI, IEWT…SCYC, FILK…IIYY, WPII…IGLY, LTLL…MKWF, LENH…FIFI, and IIFF…YLVI. The 200-residue stretch at 46 to 245 folds into the TLC domain; sequence SSKIEWTNKI…VIKGILKHLS (200 aa).

Belongs to the TLCD4 family.

Its subcellular location is the membrane. This is TLC domain-containing protein 4 A (tlcd4a) from Dictyostelium discoideum (Social amoeba).